The following is a 561-amino-acid chain: Potassium-transporting ATPase potassium-binding subunit (561 aa).

Helical transmembrane passes span Ile4–Ile24, Ala65–Leu85, Gly134–Ile154, Leu177–Val197, Phe253–Phe273, Ala285–Glu305, Gly380–Gly400, Met417–Val437, Met484–Leu504, and Phe528–Leu548.

It belongs to the KdpA family. The system is composed of three essential subunits: KdpA, KdpB and KdpC.

The protein resides in the cell membrane. In terms of biological role, part of the high-affinity ATP-driven potassium transport (or Kdp) system, which catalyzes the hydrolysis of ATP coupled with the electrogenic transport of potassium into the cytoplasm. This subunit binds the extracellular potassium ions and delivers the ions to the membrane domain of KdpB through an intramembrane tunnel. This Listeria welshimeri serovar 6b (strain ATCC 35897 / DSM 20650 / CCUG 15529 / CIP 8149 / NCTC 11857 / SLCC 5334 / V8) protein is Potassium-transporting ATPase potassium-binding subunit.